We begin with the raw amino-acid sequence, 95 residues long: Putative pterin-4-alpha-carbinolamine dehydratase (95 aa).

Belongs to the pterin-4-alpha-carbinolamine dehydratase family.

It carries out the reaction (4aS,6R)-4a-hydroxy-L-erythro-5,6,7,8-tetrahydrobiopterin = (6R)-L-erythro-6,7-dihydrobiopterin + H2O. The protein is Putative pterin-4-alpha-carbinolamine dehydratase of Prochlorococcus marinus (strain NATL2A).